We begin with the raw amino-acid sequence, 348 residues long: Mannonate dehydratase (348 aa).

Belongs to the mannonate dehydratase family. Requires Fe(2+) as cofactor. The cofactor is Mn(2+).

The catalysed reaction is D-mannonate = 2-dehydro-3-deoxy-D-gluconate + H2O. Its pathway is carbohydrate metabolism; pentose and glucuronate interconversion. Its function is as follows. Catalyzes the dehydration of D-mannonate. The protein is Mannonate dehydratase of Staphylococcus haemolyticus (strain JCSC1435).